Consider the following 335-residue polypeptide: Glycerol-3-phosphate dehydrogenase [NAD(P)+] (335 aa).

Residues Ser-15, Tyr-16, Arg-36, and Lys-110 each coordinate NADPH. Residues Lys-110, Gly-139, and Thr-141 each coordinate sn-glycerol 3-phosphate. Ala-143 contributes to the NADPH binding site. 5 residues coordinate sn-glycerol 3-phosphate: Lys-195, Asp-248, Ser-258, Arg-259, and Asn-260. Residue Lys-195 is the Proton acceptor of the active site. NADPH is bound at residue Arg-259. Residues Val-283 and Glu-285 each coordinate NADPH.

The protein belongs to the NAD-dependent glycerol-3-phosphate dehydrogenase family.

The protein resides in the cytoplasm. The enzyme catalyses sn-glycerol 3-phosphate + NAD(+) = dihydroxyacetone phosphate + NADH + H(+). It carries out the reaction sn-glycerol 3-phosphate + NADP(+) = dihydroxyacetone phosphate + NADPH + H(+). The protein operates within membrane lipid metabolism; glycerophospholipid metabolism. Catalyzes the reduction of the glycolytic intermediate dihydroxyacetone phosphate (DHAP) to sn-glycerol 3-phosphate (G3P), the key precursor for phospholipid synthesis. This chain is Glycerol-3-phosphate dehydrogenase [NAD(P)+], found in Pseudoalteromonas translucida (strain TAC 125).